Consider the following 340-residue polypeptide: Glycerol-3-phosphate dehydrogenase [NAD(P)+] (340 aa).

Ser13, Trp14, and Lys108 together coordinate NADPH. Sn-glycerol 3-phosphate is bound by residues Lys108, Gly139, and Ser141. Ala143 serves as a coordination point for NADPH. Sn-glycerol 3-phosphate-binding residues include Lys194, Asp247, Ser257, Arg258, and Asn259. The Proton acceptor role is filled by Lys194. Residue Arg258 coordinates NADPH. 2 residues coordinate NADPH: Val282 and Glu284.

This sequence belongs to the NAD-dependent glycerol-3-phosphate dehydrogenase family.

It localises to the cytoplasm. The enzyme catalyses sn-glycerol 3-phosphate + NAD(+) = dihydroxyacetone phosphate + NADH + H(+). It catalyses the reaction sn-glycerol 3-phosphate + NADP(+) = dihydroxyacetone phosphate + NADPH + H(+). Its pathway is membrane lipid metabolism; glycerophospholipid metabolism. In terms of biological role, catalyzes the reduction of the glycolytic intermediate dihydroxyacetone phosphate (DHAP) to sn-glycerol 3-phosphate (G3P), the key precursor for phospholipid synthesis. This Streptococcus thermophilus (strain ATCC BAA-491 / LMD-9) protein is Glycerol-3-phosphate dehydrogenase [NAD(P)+].